The chain runs to 380 residues: Cytochrome b (380 aa).

4 consecutive transmembrane segments (helical) span residues 34–54, 78–99, 114–134, and 179–199; these read FGSL…LLAM, WLIR…YMHI, WNTG…GYVL, and FFAL…IHLT. Heme b contacts are provided by His-84 and His-98. Positions 183 and 197 each coordinate heme b. His-202 contributes to the a ubiquinone binding site. 4 helical membrane passes run 227–247, 289–309, 321–341, and 348–368; these read LKDI…ALFS, LGGV…PLLH, LSQL…WIGS, and FIII…ILFP.

It belongs to the cytochrome b family. As to quaternary structure, the cytochrome bc1 complex contains 11 subunits: 3 respiratory subunits (MT-CYB, CYC1 and UQCRFS1), 2 core proteins (UQCRC1 and UQCRC2) and 6 low-molecular weight proteins (UQCRH/QCR6, UQCRB/QCR7, UQCRQ/QCR8, UQCR10/QCR9, UQCR11/QCR10 and a cleavage product of UQCRFS1). This cytochrome bc1 complex then forms a dimer. Heme b serves as cofactor.

The protein localises to the mitochondrion inner membrane. Functionally, component of the ubiquinol-cytochrome c reductase complex (complex III or cytochrome b-c1 complex) that is part of the mitochondrial respiratory chain. The b-c1 complex mediates electron transfer from ubiquinol to cytochrome c. Contributes to the generation of a proton gradient across the mitochondrial membrane that is then used for ATP synthesis. This is Cytochrome b (MT-CYB) from Oceanodroma furcata (Fork-tailed storm-petrel).